The primary structure comprises 2543 residues: Polyketide synthase PksR (2543 aa).

Residues 165-269 are methyltransferase; sequence LEIGAGTGGT…KAVLKKNGLL (105 aa). A Carrier 1 domain is found at 376 to 452; that stretch reads SLIEQTAQFV…ELVEYLVKGH (77 aa). O-(pantetheine 4'-phosphoryl)serine is present on Ser413. Residues 465-485 are disordered; that stretch reads TKPAKNEAPLQTERTDPNKPF. In terms of domain architecture, Ketosynthase family 3 (KS3) 1 spans 527-959; that stretch reads TEDIAIIGVS…GAYANLIIEE (433 aa). The For beta-ketoacyl synthase 1 activity role is filled by Cys700. An N-terminal hotdog fold region spans residues 1114-1242; the sequence is HFDVSSINEK…GQCGIGSFEP (129 aa). Positions 1114–1397 constitute a PKS/mFAS DH domain; sequence HFDVSSINEK…LKQLRISNQR (284 aa). Residues 1255–1397 are C-terminal hotdog fold; sequence TKLHHIDQMY…LKQLRISNQR (143 aa). The region spanning 1407–1485 is the Carrier 2 domain; sequence SNLKARIRSY…ELIDFFADKH (79 aa). Residue Ser1445 is modified to O-(pantetheine 4'-phosphoryl)serine. In terms of domain architecture, Ketosynthase family 3 (KS3) 2 spans 1528–1946; it reads ADGIAIIGMS…GVNAHVILEE (419 aa). Active-site for beta-ketoacyl synthase 2 activity residues include Cys1680, His1815, and His1862. The Carrier 3 domain occupies 2134–2208; sequence RINNSSDHHI…DMMDLIAKKQ (75 aa). Ser2168 bears the O-(pantetheine 4'-phosphoryl)serine mark. Residues 2234 to 2514 are thioesterase; that stretch reads RPVFWFHGGV…EFCEKLYSNR (281 aa).

Pantetheine 4'-phosphate is required as a cofactor.

The protein resides in the cytoplasm. It participates in antibiotic biosynthesis; bacillaene biosynthesis. Involved in some intermediate steps for the synthesis of the antibiotic polyketide bacillaene which is involved in secondary metabolism. The polypeptide is Polyketide synthase PksR (pksR) (Bacillus subtilis (strain 168)).